The chain runs to 608 residues: ATP-citrate synthase beta chain protein 1 (608 aa).

Residues 214–234 (ILRF…ELGG) and 265–291 (FKSE…KNQA) contribute to the ATP site. Glu-231 provides a ligand contact to Mg(2+). His-273 functions as the Tele-phosphohistidine intermediate in the catalytic mechanism. 292 to 302 (LQDAGATVPTS) is a binding site for CoA.

The protein belongs to the succinate/malate CoA ligase alpha subunit family. Heterooctamer of 4 alpha and 4 beta chains.

The protein resides in the cytoplasm. It localises to the cytosol. The enzyme catalyses oxaloacetate + acetyl-CoA + ADP + phosphate = citrate + ATP + CoA. Functionally, ATP citrate-lyase is the primary enzyme responsible for the synthesis of cytosolic acetyl-CoA, used for the elongation of fatty acids and biosynthesis of isoprenoids, flavonoids and malonated derivatives. May supply substrate to the cytosolic acetyl-CoA carboxylase, which generates the malonyl-CoA used for the synthesis of a multitude of compounds, including very long chain fatty acids and flavonoids. Required for normal growth and development and elongation of C18 fatty acids to C20 to C24 fatty acids in seeds. In contrast to all known animal ACL enzymes having a homomeric structure, plant ACLs are composed of alpha and beta chains. This chain is ATP-citrate synthase beta chain protein 1 (ACLB-1), found in Arabidopsis thaliana (Mouse-ear cress).